Consider the following 257-residue polypeptide: Imidazole glycerol phosphate synthase subunit HisF (257 aa).

Active-site residues include Asp11 and Asp130.

This sequence belongs to the HisA/HisF family. As to quaternary structure, heterodimer of HisH and HisF.

The protein resides in the cytoplasm. It catalyses the reaction 5-[(5-phospho-1-deoxy-D-ribulos-1-ylimino)methylamino]-1-(5-phospho-beta-D-ribosyl)imidazole-4-carboxamide + L-glutamine = D-erythro-1-(imidazol-4-yl)glycerol 3-phosphate + 5-amino-1-(5-phospho-beta-D-ribosyl)imidazole-4-carboxamide + L-glutamate + H(+). It participates in amino-acid biosynthesis; L-histidine biosynthesis; L-histidine from 5-phospho-alpha-D-ribose 1-diphosphate: step 5/9. IGPS catalyzes the conversion of PRFAR and glutamine to IGP, AICAR and glutamate. The HisF subunit catalyzes the cyclization activity that produces IGP and AICAR from PRFAR using the ammonia provided by the HisH subunit. This Shewanella loihica (strain ATCC BAA-1088 / PV-4) protein is Imidazole glycerol phosphate synthase subunit HisF.